The sequence spans 490 residues: Cytochrome P450 2C55 (490 aa).

Cys435 provides a ligand contact to heme.

The protein belongs to the cytochrome P450 family. Requires heme as cofactor. As to expression, highest level in colon. Low levels in liver and small intestine.

It is found in the endoplasmic reticulum membrane. Its subcellular location is the microsome membrane. The enzyme catalyses an organic molecule + reduced [NADPH--hemoprotein reductase] + O2 = an alcohol + oxidized [NADPH--hemoprotein reductase] + H2O + H(+). Functionally, metabolizes arachidonic acid mainly to 19-hydroxyeicosatetraenoic acid (HETE). This chain is Cytochrome P450 2C55, found in Mus musculus (Mouse).